Reading from the N-terminus, the 891-residue chain is Alanine--tRNA ligase (891 aa).

H564, H568, C681, and H685 together coordinate Zn(2+).

This sequence belongs to the class-II aminoacyl-tRNA synthetase family. It depends on Zn(2+) as a cofactor.

It is found in the cytoplasm. It carries out the reaction tRNA(Ala) + L-alanine + ATP = L-alanyl-tRNA(Ala) + AMP + diphosphate. Catalyzes the attachment of alanine to tRNA(Ala) in a two-step reaction: alanine is first activated by ATP to form Ala-AMP and then transferred to the acceptor end of tRNA(Ala). Also edits incorrectly charged Ser-tRNA(Ala) and Gly-tRNA(Ala) via its editing domain. This chain is Alanine--tRNA ligase, found in Methylorubrum extorquens (strain PA1) (Methylobacterium extorquens).